The following is an 89-amino-acid chain: Small ribosomal subunit protein uS14A (89 aa).

It belongs to the universal ribosomal protein uS14 family. Part of the 30S ribosomal subunit. Contacts proteins S3 and S10.

Binds 16S rRNA, required for the assembly of 30S particles and may also be responsible for determining the conformation of the 16S rRNA at the A site. The protein is Small ribosomal subunit protein uS14A of Bacillus pumilus (strain SAFR-032).